We begin with the raw amino-acid sequence, 953 residues long: Protein ENHANCER OF LHP1 1 (953 aa).

WD repeat units follow at residues 15-55 (GGSA…TLPP), 60-99 (HHQD…FQTN), 102-143 (RFTL…RVLK), 144-183 (GHKG…VSFT), 192-232 (GFNT…KLFA), 236-275 (DHLE…DIDR), and 277-316 (KFEE…SMLS). Disordered stretches follow at residues 347–370 (SESL…RKRL), 385–419 (EELN…GAFK), and 851–877 (ESKV…SATK). A compositionally biased stretch (acidic residues) spans 349–359 (SLDDAMGDSDD). Positions 853 to 877 (KVQNPPASIQTSENTEAVMKSSATK) are enriched in polar residues. The Nuclear localization signal signature appears at 900-907 (TKKDKSDD). Residues 919–953 (KNPVNNVNKEDKGQEKEVNQGEARRSSNPFLKSTV) form a disordered region. Residues 926-943 (NKEDKGQEKEVNQGEARR) are compositionally biased toward basic and acidic residues. A compositionally biased stretch (polar residues) spans 944-953 (SSNPFLKSTV).

Interacts with EZA1/SWN, LHP1, SLD5 and CLF in the nucleus. Expressed in root meristematic zones, initiating lateral roots, young leaves and the shoot apex.

The protein localises to the nucleus. Functionally, participates in maintaining the H3K27me3 mark at target genes by interacting with LHP1-PRC2 complexes during replication, thus contributing to H3K27me3 inheritance. This chain is Protein ENHANCER OF LHP1 1, found in Arabidopsis thaliana (Mouse-ear cress).